A 327-amino-acid chain; its full sequence is Cyclic AMP-responsive element-binding protein 1 (327 aa).

2 disordered regions span residues 1–27 (MTMESGADNQQSGDAAVTEAENQQMTV) and 94–113 (SEDSQESVDSVTDSQKRREI). The 60-residue stretch at 87–146 (QISTIAESEDSQESVDSVTDSQKRREILSRRPSYRKILNDLSSDAPGVPRIEEEKSEEET) folds into the KID domain. A Phosphoserine; by CaMK1, CaMK2, CaMK4, PKB/AKT1 or PKB/AKT2, RPS6KA3, RPS6KA4, RPS6KA5 and SGK1 modification is found at Ser119. A Glycyl lysine isopeptide (Lys-Gly) (interchain with G-Cter in SUMO2) cross-link involves residue Lys122. The segment at 126 to 151 (DLSSDAPGVPRIEEEKSEEETSAPAI) is disordered. Ser128 is modified (phosphoserine; by CaMK2). Position 257 is a phosphoserine; by HIPK2 (Ser257). The bZIP domain occupies 269-327 (ARKREVRLMKNREAARECRRKKKEYVKCLENRVAVLENQNKTLIEELKALKDLYCHKSD). The interval 270 to 295 (RKREVRLMKNREAARECRRKKKEYVK) is basic motif. Residues Lys271 and Lys290 each participate in a glycyl lysine isopeptide (Lys-Gly) (interchain with G-Cter in SUMO1) cross-link. Residues 297-318 (LENRVAVLENQNKTLIEELKAL) form a leucine-zipper region.

Belongs to the bZIP family. As to quaternary structure, interacts with PPRC1. Binds DNA as a dimer. This dimer is stabilized by magnesium ions. Interacts, through the bZIP domain, with the coactivators CRTC1/TORC1, CRTC2/TORC2 and CRTC3/TORC3. Interacts (phosphorylated form) with TOX3. When phosphorylated on Ser-119, binds CREBBP. Interacts with ARRB1. Binds to HIPK2. Interacts with SGK1. Interacts with CREBL2; regulates CREB1 phosphorylation, stability and transcriptional activity. Interacts with TSSK4; this interaction facilitates phosphorylation on Ser-119. Forms a complex with KMT2A and CREBBP. Interacts with TOX4; CREB1 is required for full induction of TOX4-dependent activity and the interaction is increased by cAMP and inhibited by insulin. In terms of processing, phosphorylation of Ser-119 allows CREBBP binding. Stimulated by phosphorylation. Phosphorylated Ser-128 can be detected in the suprachiasmatic nucleus (SCN), the amygdala, the cortex, and the hippocampus but not in the striatum nor in the cerebellum. In the SCN, phosphorylation of Ser-128 and Ser-119 are stimulated by light exposure and submitted to circadian oscillations. In the retina, only phosphorylation of Ser-119 can be detected upon light exposure. Phosphorylation of both Ser-119 and Ser-128 in the SCN regulates the activity of CREB and participates in circadian rhythm generation. Phosphorylated upon calcium influx by CaMK4 and CaMK2 on Ser-119. CaMK4 is much more potent than CAMK2 in activating CREB. Phosphorylated by CaMK2 on Ser-128. Phosphorylation of Ser-128 blocks CREB-mediated transcription even when Ser-119 is phosphorylated. Phosphorylated by CaMK1. Phosphorylation of Ser-271 by HIPK2 in response to genotoxic stress promotes CREB1 activity, facilitating the recruitment of the coactivator CBP. Phosphorylated at Ser-119 by RPS6KA3, RPS6KA4 and RPS6KA5 in response to mitogenic or stress stimuli. CREBL2 positively regulates phosphorylation at Ser-119 thereby stimulating CREB1 transcriptional activity. In liver, phosphorylation is induced by fasting or glucagon in a circadian fashion. Phosphorylated by TSSK4 on Ser-119. Sumoylated with SUMO1. Sumoylation on Lys-290, but not on Lys-271, is required for nuclear localization of this protein. Sumoylation is enhanced under hypoxia, promoting nuclear localization and stabilization. Expressed in the heart (at protein level).

It is found in the nucleus. Phosphorylation-dependent transcription factor that stimulates transcription upon binding to the DNA cAMP response element (CRE), a sequence present in many viral and cellular promoters. Transcription activation is enhanced by the TORC coactivators which act independently of Ser-119 phosphorylation. Involved in different cellular processes including the synchronization of circadian rhythmicity and the differentiation of adipose cells. Regulates the expression of apoptotic and inflammatory response factors in cardiomyocytes in response to ERFE-mediated activation of AKT signaling. The chain is Cyclic AMP-responsive element-binding protein 1 (Creb1) from Mus musculus (Mouse).